Here is a 260-residue protein sequence, read N- to C-terminus: uncharacterized protein (260 aa).

It belongs to the MG032/MG096/MG288 family.

This is an uncharacterized protein from Mycoplasma pneumoniae (strain ATCC 29342 / M129 / Subtype 1) (Mycoplasmoides pneumoniae).